The chain runs to 250 residues: HTH-type transcriptional regulator SarS (250 aa).

DNA-binding regions (H-T-H motif) lie at residues 53-76 (FKKI…VLVK) and 177-200 (LKDL…NLKK).

The protein belongs to the SarA family.

It is found in the cytoplasm. Its function is as follows. Transcriptional regulator that controls expression of some virulence factors in a cell density-dependent manner. This Staphylococcus aureus (strain MRSA252) protein is HTH-type transcriptional regulator SarS (sarS).